The chain runs to 402 residues: Omega-3 fatty acid desaturase fat-1 (402 aa).

A run of 4 helical transmembrane segments spans residues 79-99 (LVQD…FEYF), 101-121 (LFGY…LFVV), 235-255 (CVIS…IAGS), and 260-280 (FWYY…VTYL).

Belongs to the fatty acid desaturase type 1 family.

It is found in the membrane. It catalyses the reaction (9Z,12Z)-octadecadienoyl-CoA + 2 Fe(II)-[cytochrome b5] + O2 + 2 H(+) = (9Z,12Z,15Z)-octadecatrienoyl-CoA + 2 Fe(III)-[cytochrome b5] + 2 H2O. The enzyme catalyses (8Z,11Z,14Z)-eicosatrienoyl-CoA + 2 Fe(II)-[cytochrome b5] + O2 + 2 H(+) = (8Z,11Z,14Z,17Z)-eicosatetraenoyl-CoA + 2 Fe(III)-[cytochrome b5] + 2 H2O. It carries out the reaction (5Z,8Z,11Z,14Z)-eicosatetraenoyl-CoA + 2 Fe(II)-[cytochrome b5] + O2 + 2 H(+) = (5Z,8Z,11Z,14Z,17Z)-eicosapentaenoyl-CoA + 2 Fe(III)-[cytochrome b5] + 2 H2O. The catalysed reaction is (7Z,10Z,13Z,16Z)-docosatetraenoyl-CoA + 2 Fe(II)-[cytochrome b5] + O2 + 2 H(+) = (7Z,10Z,13Z,16Z,19Z)-docosapentaenoyl-CoA + 2 Fe(III)-[cytochrome b5] + 2 H2O. It catalyses the reaction (6Z,9Z,12Z)-octadecatrienoyl-CoA + 2 Fe(II)-[cytochrome b5] + O2 + 2 H(+) = (6Z,9Z,12Z,15Z)-octadecatetraenoyl-CoA + 2 Fe(III)-[cytochrome b5] + 2 H2O. It participates in lipid metabolism; polyunsaturated fatty acid biosynthesis. In terms of biological role, omega-3 fatty acid desaturase that recognizes a range of 18- and 20-carbon omega-6 substrates. Introduces a double bond in the fatty acid chain three carbons away from terminal methyl group to biosynthesize n-3 (omega-3) polyunsaturated fatty acids (PUFAs) endogenously (PUFAs are essential for membrane structure and many cellular and physiological processes). Acts on a number of substrates like linoleoyl-CoA ((9Z,12Z)-octadecadienoyl-CoA, 18:2n-6), dihomo-gamma-linolenoyl-CoA ((8Z,11Z,14Z)-eicosatrienoyl-CoA, 20:3n-6), and arachidonoyl-CoA ((5Z,8Z,11Z,14Z)-eicosatetraenoyl-CoA, 20:4n-6), to generate alpha-linolenoyl-CoA ((9Z,12Z,15Z)-octadecatrienoyl-CoA, 18:3n-3), (8Z,11Z,14Z,17Z)-eicosatetraenoyl-CoA (20:4n-3) and (5Z,8Z,11Z,14Z,17Z)-eicosapentaenoyl-CoA (20:5n-3) respectively. Unlike plants, Caenorhabditis elegans desaturases seem to use fatty acyl-CoAs as substrates. The sequence is that of Omega-3 fatty acid desaturase fat-1 (fat-1) from Caenorhabditis elegans.